We begin with the raw amino-acid sequence, 97 residues long: Lipolysis-activating peptide 1-alpha chain (97 aa).

Positions M1–S21 are cleaved as a signal peptide. Positions P25–K88 constitute an LCN-type CS-alpha/beta domain. 3 cysteine pairs are disulfide-bonded: C39-C62, C48-C67, and C52-C69.

It belongs to the long (3 C-C) scorpion toxin superfamily. In terms of assembly, monomer (edited version) and heterodimer (non-edited version) of this alpha chain and a beta chain (AC P0CI43). In terms of tissue distribution, expressed by the venom gland.

The protein localises to the secreted. In terms of biological role, the heterodimer non-edited LVP1 induces lipolysis in rat adipocytes. Induction of lipolysis by LVP1 appears to be mediated through the beta-2 adrenergic receptor pathway (ADRB2). The edited BmKBTx-like, similar to beta-toxins, may modulate voltage-gated sodium channels (Nav) and may block voltage-gated potassium channels (Kv). The protein is Lipolysis-activating peptide 1-alpha chain of Lychas mucronatus (Chinese swimming scorpion).